A 539-amino-acid chain; its full sequence is Phosphoenolpyruvate carboxykinase (ATP) (539 aa).

Positions 64, 206, and 212 each coordinate substrate. ATP is bound by residues Lys-212, His-231, and 247–255 (GLSGTGKTT). Lys-212 and His-231 together coordinate Mn(2+). Residue Asp-268 participates in Mn(2+) binding. ATP-binding positions include Glu-296, Arg-332, 448 to 449 (RI), and Thr-454. A substrate-binding site is contributed by Arg-332.

This sequence belongs to the phosphoenolpyruvate carboxykinase (ATP) family. In terms of assembly, monomer. Requires Mn(2+) as cofactor.

Its subcellular location is the cytoplasm. The catalysed reaction is oxaloacetate + ATP = phosphoenolpyruvate + ADP + CO2. It functions in the pathway carbohydrate biosynthesis; gluconeogenesis. Involved in the gluconeogenesis. Catalyzes the conversion of oxaloacetate (OAA) to phosphoenolpyruvate (PEP) through direct phosphoryl transfer between the nucleoside triphosphate and OAA. The chain is Phosphoenolpyruvate carboxykinase (ATP) from Salmonella choleraesuis (strain SC-B67).